A 696-amino-acid chain; its full sequence is Rho-related BTB domain-containing protein 1 (696 aa).

The interval 1–210 is rho-like; that stretch reads MDADMDYERP…DNAIRAALIS (210 aa). GTP is bound by residues 21–28, 84–88, and 140–143; these read GDNAVGKT, DTFGD, and CQLD. BTB domains are found at residues 266–427 and 485–552; these read ADVL…DEKE and SDVT…SPNL. The interval 327-348 is disordered; sequence VDPEEEREEGPPRIPQADQWKS.

It belongs to the small GTPase superfamily. Rho family. In terms of tissue distribution, ubiquitous, with highest levels in skeletal muscle, placenta, testis, stomach, and kidney, followed by uterus and adrenal gland. Expressed in a variety of fetal tissues.

This chain is Rho-related BTB domain-containing protein 1 (RHOBTB1), found in Homo sapiens (Human).